A 154-amino-acid polypeptide reads, in one-letter code: Putative lipoprotein MAB_4074c (154 aa).

Residues 1–21 (MMNRVIVGAMGLLAAGAVVVG) form the signal peptide. Residue cysteine 22 is the site of N-palmitoyl cysteine attachment. The S-diacylglycerol cysteine moiety is linked to residue cysteine 22.

The protein belongs to the mycobacterial 19 kDa antigen family.

It localises to the cell membrane. The polypeptide is Putative lipoprotein MAB_4074c (Mycobacteroides abscessus (strain ATCC 19977 / DSM 44196 / CCUG 20993 / CIP 104536 / JCM 13569 / NCTC 13031 / TMC 1543 / L948) (Mycobacterium abscessus)).